Reading from the N-terminus, the 359-residue chain is UDP-N-acetylglucosamine--N-acetylmuramyl-(pentapeptide) pyrophosphoryl-undecaprenol N-acetylglucosamine transferase (359 aa).

UDP-N-acetyl-alpha-D-glucosamine contacts are provided by residues 14–16, asparagine 126, arginine 166, serine 194, isoleucine 248, and glutamine 293; that span reads TGG.

The protein belongs to the glycosyltransferase 28 family. MurG subfamily.

It is found in the cell inner membrane. The enzyme catalyses di-trans,octa-cis-undecaprenyl diphospho-N-acetyl-alpha-D-muramoyl-L-alanyl-D-glutamyl-meso-2,6-diaminopimeloyl-D-alanyl-D-alanine + UDP-N-acetyl-alpha-D-glucosamine = di-trans,octa-cis-undecaprenyl diphospho-[N-acetyl-alpha-D-glucosaminyl-(1-&gt;4)]-N-acetyl-alpha-D-muramoyl-L-alanyl-D-glutamyl-meso-2,6-diaminopimeloyl-D-alanyl-D-alanine + UDP + H(+). It participates in cell wall biogenesis; peptidoglycan biosynthesis. Cell wall formation. Catalyzes the transfer of a GlcNAc subunit on undecaprenyl-pyrophosphoryl-MurNAc-pentapeptide (lipid intermediate I) to form undecaprenyl-pyrophosphoryl-MurNAc-(pentapeptide)GlcNAc (lipid intermediate II). This chain is UDP-N-acetylglucosamine--N-acetylmuramyl-(pentapeptide) pyrophosphoryl-undecaprenol N-acetylglucosamine transferase, found in Verminephrobacter eiseniae (strain EF01-2).